The sequence spans 130 residues: Dihydroneopterin aldolase (130 aa).

Substrate-binding positions include glutamate 22, tyrosine 54, and 73–74 (IE). The Proton donor/acceptor role is filled by lysine 100.

It belongs to the DHNA family.

It carries out the reaction 7,8-dihydroneopterin = 6-hydroxymethyl-7,8-dihydropterin + glycolaldehyde. The protein operates within cofactor biosynthesis; tetrahydrofolate biosynthesis; 2-amino-4-hydroxy-6-hydroxymethyl-7,8-dihydropteridine diphosphate from 7,8-dihydroneopterin triphosphate: step 3/4. Its function is as follows. Catalyzes the conversion of 7,8-dihydroneopterin to 6-hydroxymethyl-7,8-dihydropterin. The chain is Dihydroneopterin aldolase (folB) from Methylorubrum extorquens (strain ATCC 14718 / DSM 1338 / JCM 2805 / NCIMB 9133 / AM1) (Methylobacterium extorquens).